The sequence spans 436 residues: Na(+)/H(+) antiporter NhaA 1 (436 aa).

11 consecutive transmembrane segments (helical) span residues 35–55, 80–100, 116–136, 147–167, 176–196, 201–221, 226–246, 283–303, 313–333, 354–374, and 385–405; these read FGGG…NSPW, LATW…GLEL, ALPV…YVGV, GWAI…AVIG, AFLL…IAIF, FKLT…LLVQ, WWWA…ESGV, VSAG…SLRG, PIVV…IFGS, LLGV…IGEL, and VKAA…IVLI.

Belongs to the NhaA Na(+)/H(+) (TC 2.A.33) antiporter family.

It is found in the cell membrane. The enzyme catalyses Na(+)(in) + 2 H(+)(out) = Na(+)(out) + 2 H(+)(in). Functionally, na(+)/H(+) antiporter that extrudes sodium in exchange for external protons. This is Na(+)/H(+) antiporter NhaA 1 from Salinispora tropica (strain ATCC BAA-916 / DSM 44818 / JCM 13857 / NBRC 105044 / CNB-440).